The sequence spans 204 residues: Large ribosomal subunit protein eL15 (204 aa).

Belongs to the eukaryotic ribosomal protein eL15 family.

This Chironomus tentans (Midge) protein is Large ribosomal subunit protein eL15 (RpL15).